We begin with the raw amino-acid sequence, 292 residues long: Acetyl-coenzyme A carboxylase carboxyl transferase subunit beta (292 aa).

Residues 29–292 (LWVKCSECGQ…HGVKDLMGAN (264 aa)) form the CoA carboxyltransferase N-terminal domain. C33, C36, C52, and C55 together coordinate Zn(2+). Residues 33 to 55 (CSECGQVAYRKDLISNFNVCSNC) form a C4-type zinc finger.

The protein belongs to the AccD/PCCB family. In terms of assembly, acetyl-CoA carboxylase is a heterohexamer composed of biotin carboxyl carrier protein (AccB), biotin carboxylase (AccC) and two subunits each of ACCase subunit alpha (AccA) and ACCase subunit beta (AccD). Requires Zn(2+) as cofactor.

Its subcellular location is the cytoplasm. The catalysed reaction is N(6)-carboxybiotinyl-L-lysyl-[protein] + acetyl-CoA = N(6)-biotinyl-L-lysyl-[protein] + malonyl-CoA. It participates in lipid metabolism; malonyl-CoA biosynthesis; malonyl-CoA from acetyl-CoA: step 1/1. In terms of biological role, component of the acetyl coenzyme A carboxylase (ACC) complex. Biotin carboxylase (BC) catalyzes the carboxylation of biotin on its carrier protein (BCCP) and then the CO(2) group is transferred by the transcarboxylase to acetyl-CoA to form malonyl-CoA. The chain is Acetyl-coenzyme A carboxylase carboxyl transferase subunit beta from Prochlorococcus marinus (strain MIT 9515).